The following is a 333-amino-acid chain: Tryptophan--tRNA ligase (333 aa).

Residues 9-11 and 17-18 each bind ATP; these read QPT and GN. The 'HIGH' region motif lies at 10–18; sequence PTNNLTLGN. Aspartate 140 is an L-tryptophan binding site. ATP contacts are provided by residues 152 to 154, isoleucine 191, and 200 to 204; these read GQD and KMSKS. Positions 200-204 match the 'KMSKS' region motif; it reads KMSKS.

Belongs to the class-I aminoacyl-tRNA synthetase family. In terms of assembly, homodimer.

It localises to the cytoplasm. The enzyme catalyses tRNA(Trp) + L-tryptophan + ATP = L-tryptophyl-tRNA(Trp) + AMP + diphosphate + H(+). Catalyzes the attachment of tryptophan to tRNA(Trp). In Ureaplasma parvum serovar 3 (strain ATCC 700970), this protein is Tryptophan--tRNA ligase.